We begin with the raw amino-acid sequence, 306 residues long: Latrophilin receptor-like protein A (306 aa).

Residues 1–15 lie on the Extracellular side of the membrane; it reads MPSQLLNTVLSYLTD. The helical transmembrane segment at 16 to 36 threads the bilayer; it reads ILLSLSIVGSFLTIFTFMLYP. Over 37 to 41 the chain is Cytoplasmic; it reads KLRSY. A helical membrane pass occupies residues 42-62; it reads PIKLIIYLCMSIVFSLFFFEI. The Extracellular segment spans residues 63-70; that stretch reads SFRSSNSL. Residues 71–91 form a helical membrane-spanning segment; sequence FCIPAAILVHYFFLANFFWTF. The Cytoplasmic segment spans residues 92 to 113; sequence SVSFNFFQMIVKRNRDSEFYER. A helical transmembrane segment spans residues 114–134; that stretch reads YYHLISWGIPFIIIIFCAAFK. At 135 to 152 the chain is on the extracellular side; sequence KYVDRGGFCYLEDQYSVY. The chain crosses the membrane as a helical span at residues 153-173; that stretch reads FGFFMPGVIIVCSNICIYVFV. At 174–196 the chain is on the cytoplasmic side; sequence AKEIYKTLRHTPTQKRQTVKEFR. A helical transmembrane segment spans residues 197-217; it reads VYFSIFVSIGSSWIFGFIYMF. The Extracellular segment spans residues 218–222; it reads SDSNS. The chain crosses the membrane as a helical span at residues 223–243; sequence IIGYIFLILFSISTSLQGFFI. At 244-306 the chain is on the cytoplasmic side; the sequence is FISYCLNYKV…TTTTTNVYSA (63 aa). The interval 279-306 is disordered; the sequence is TTQSGPTGTTDSSSTMTSTTTTTNVYSA.

This sequence belongs to the G-protein coupled receptor 2 family. LN-TM7 subfamily.

The protein resides in the membrane. This Dictyostelium discoideum (Social amoeba) protein is Latrophilin receptor-like protein A (lrlA).